The primary structure comprises 431 residues: RbAp48-related WD40 repeat-containing protein prw1 (431 aa).

WD repeat units lie at residues Ser127–Asp159, Lys182–Asp213, Ser232–Asp263, Ala279–Asp310, Gly323–Asp354, and Gly380–Thr411.

The protein belongs to the WD repeat HIR1 family. In terms of assembly, heterotetramer of alp13, clr6, prw1 and pst2.

It is found in the nucleus. Has a role in chromatin assembly and chromosome segregation. Involved in the deacetylation of histones. This chain is RbAp48-related WD40 repeat-containing protein prw1 (prw1), found in Schizosaccharomyces pombe (strain 972 / ATCC 24843) (Fission yeast).